The following is a 795-amino-acid chain: MSGVSEEDPEGLAPQGLPALGGACLATMDKKLNVLTEKVDRLLHFQEDVTEKLQCVCQGMDHLEQDLHRLEASRELSLAGSGSTPPTTAQAAWPEVLELVRAVRQEGAQHGARLEALFKMVVAVDRAITLVGSTFQNSKVADFIMQGTVPGRKGSLADGPEENKEQAEVAGVKPNHVLTTGGVQADASRTLWEESQKEDIPVRTVEGLPLIINTSLKGADLTQAGASLRQGVEVLGPGQVPLPTEAESRLPETASENTGATLELSVAIDRISEVLTSLKMSQGGGQETSSSKPDCWLSEEAMRLSSGPLPQPLGPLTPDSDIHSGDALPRIPINMQEMATPGELLETQSGSPIGSAEAPGLGTVLEDQIPKGARPFPPLPKRSSNNGGMSAEEEIGSGAEPMRGPSLATRDWRDETVGTTDLQQGIDPGAVSPEPGKDHAAQGPGRTEAGRLSSAAEAAIVVLDDSAAPPAPFEHRVVSIKDTLISAGYTVSQHEVLGGGRFGQVHRCTERSTGLALAAKIIKVKNVKDREDVKNEVNIMNQLSHVNLIQLYDAFESKSSFTLIMEYVDGGELFDRITDEKYHLTELDVVLFTRQICEGVHYLHQHYILHLDLKPENILCVSQTGHQIKIIDFGLARRYKPREKLKVNFGTPEFLAPEVVNYEFVSFPTDMWSVGVITYMLLSGLSPFLGETDAETMNFIVNCSWDFDADTFKGLSEEAKDFVSRLLVKEKSCRMSATQCLKHEWLSHLPAKASGSNVRLRSQQLLQKYMAQSKWKKHFHVVTAVNRLRKFPTCP.

The residue at position 155 (S155) is a Phosphoserine. Disordered regions lie at residues 236 to 257 and 305 to 328; these read GPGQ…ASEN and SSGP…GDAL. Residues S351 and S432 each carry the phosphoserine modification. Residues 367 to 452 are disordered; that stretch reads DQIPKGARPF…GPGRTEAGRL (86 aa). Positions 491–746 constitute a Protein kinase domain; that stretch reads VSQHEVLGGG…ATQCLKHEWL (256 aa). Residues 497–505 and K520 each bind ATP; that span reads LGGGRFGQV. The active-site Proton acceptor is D612.

Belongs to the protein kinase superfamily. CAMK Ser/Thr protein kinase family. Mg(2+) is required as a cofactor. Post-translationally, phosphorylated on serine residues. In terms of tissue distribution, restricted to cardiomyocytes (at protein level). Down-regulated in heart after experimental myocardial infarction at the protein level; no significant changes at the mRNA level.

The protein localises to the cytoplasm. The catalysed reaction is L-seryl-[myosin light chain] + ATP = O-phospho-L-seryl-[myosin light chain] + ADP + H(+). It catalyses the reaction L-threonyl-[myosin light chain] + ATP = O-phospho-L-threonyl-[myosin light chain] + ADP + H(+). Functionally, kinase that phosphorylates MYL2 in vitro. Has been proposed to be calmodulin-dependent, although MYL2 phosphorylation has also been observed in the presence or absence of calmodulin. Promotes sarcomere formation in cardiomyocytes and increases cardiomyocyte contractility. This Mus musculus (Mouse) protein is Myosin light chain kinase 3 (Mylk3).